Reading from the N-terminus, the 389-residue chain is tRNA-specific 2-thiouridylase MnmA (389 aa).

ATP-binding positions include 34–41 (AMSGGVDS) and L60. Residue C128 is the Nucleophile of the active site. C128 and C225 are joined by a disulfide. Position 152 (G152) interacts with ATP. The interval 174–176 (RDQ) is interaction with tRNA. C225 functions as the Cysteine persulfide intermediate in the catalytic mechanism.

Belongs to the MnmA/TRMU family.

The protein localises to the cytoplasm. It carries out the reaction S-sulfanyl-L-cysteinyl-[protein] + uridine(34) in tRNA + AH2 + ATP = 2-thiouridine(34) in tRNA + L-cysteinyl-[protein] + A + AMP + diphosphate + H(+). In terms of biological role, catalyzes the 2-thiolation of uridine at the wobble position (U34) of tRNA, leading to the formation of s(2)U34. The protein is tRNA-specific 2-thiouridylase MnmA of Paracoccus denitrificans (strain Pd 1222).